The sequence spans 146 residues: Hemoglobin subunit beta-1/2 (146 aa).

Position 1 is an N-acetylvaline (V1). Positions 2–146 (HLTGEEKSGL…VANALAHKYH (145 aa)) constitute a Globin domain. Residue T12 is modified to Phosphothreonine. The residue at position 59 (K59) is an N6-acetyllysine. H63 provides a ligand contact to heme b. Residue K82 is modified to N6-acetyllysine. Residue H92 coordinates heme b. At C93 the chain carries S-nitrosocysteine. K144 carries the post-translational modification N6-acetyllysine.

It belongs to the globin family. As to quaternary structure, heterotetramer of two alpha chains and two beta chains. Red blood cells.

Functionally, involved in oxygen transport from the lung to the various peripheral tissues. In Physeter macrocephalus (Sperm whale), this protein is Hemoglobin subunit beta-1/2 (HBB).